The following is a 198-amino-acid chain: Glycerol-3-phosphate acyltransferase (198 aa).

3 helical membrane-spanning segments follow: residues A5–I25, V114–L134, and A154–V176.

This sequence belongs to the PlsY family. Probably interacts with PlsX.

It is found in the cell membrane. The enzyme catalyses an acyl phosphate + sn-glycerol 3-phosphate = a 1-acyl-sn-glycero-3-phosphate + phosphate. It participates in lipid metabolism; phospholipid metabolism. Functionally, catalyzes the transfer of an acyl group from acyl-phosphate (acyl-PO(4)) to glycerol-3-phosphate (G3P) to form lysophosphatidic acid (LPA). This enzyme utilizes acyl-phosphate as fatty acyl donor, but not acyl-CoA or acyl-ACP. The sequence is that of Glycerol-3-phosphate acyltransferase from Desulforudis audaxviator (strain MP104C).